A 179-amino-acid polypeptide reads, in one-letter code: Large ribosomal subunit protein uL5 (179 aa).

The protein belongs to the universal ribosomal protein uL5 family. In terms of assembly, part of the 50S ribosomal subunit; part of the 5S rRNA/L5/L18/L25 subcomplex. Contacts the 5S rRNA and the P site tRNA. Forms a bridge to the 30S subunit in the 70S ribosome.

This is one of the proteins that bind and probably mediate the attachment of the 5S RNA into the large ribosomal subunit, where it forms part of the central protuberance. In the 70S ribosome it contacts protein S13 of the 30S subunit (bridge B1b), connecting the 2 subunits; this bridge is implicated in subunit movement. Contacts the P site tRNA; the 5S rRNA and some of its associated proteins might help stabilize positioning of ribosome-bound tRNAs. The chain is Large ribosomal subunit protein uL5 from Edwardsiella ictaluri (strain 93-146).